We begin with the raw amino-acid sequence, 256 residues long: Eukaryotic translation initiation factor 3 subunit J (256 aa).

Composition is skewed to acidic residues over residues 1 to 14 and 35 to 54; these read MAEN…DFEP and EGED…EEAE. Disordered stretches follow at residues 1-109 and 214-237; these read MAEN…SPEE and QSKA…MKND. Positions 55 to 101 are enriched in basic and acidic residues; it reads AATKQEAQKTVEPKVSEKKKLLEKIREKEKLHKKRQEEVNQQEKEGT. Residues 70–99 adopt a coiled-coil conformation; the sequence is SEKKKLLEKIREKEKLHKKRQEEVNQQEKE.

It belongs to the eIF-3 subunit J family. Component of the eukaryotic translation initiation factor 3 (eIF-3) complex, which is composed of 13 subunits: eif3a, eif3b, eif3c, eif3d, eif3e, eif3f, eif3g, eif3h, eif3i, eif3j, eif3k, eif3l and eif3m.

The protein localises to the cytoplasm. Functionally, component of the eukaryotic translation initiation factor 3 (eIF-3) complex, which is involved in protein synthesis of a specialized repertoire of mRNAs and, together with other initiation factors, stimulates binding of mRNA and methionyl-tRNAi to the 40S ribosome. The eIF-3 complex specifically targets and initiates translation of a subset of mRNAs involved in cell proliferation. In Xenopus tropicalis (Western clawed frog), this protein is Eukaryotic translation initiation factor 3 subunit J (eif3j).